The following is a 539-amino-acid chain: GMP synthase [glutamine-hydrolyzing] (539 aa).

In terms of domain architecture, Glutamine amidotransferase type-1 spans 4–202; it reads KILILDFGSQ…VLQIAGAKPD (199 aa). Cys81 functions as the Nucleophile in the catalytic mechanism. Active-site residues include His176 and Glu178. Residues 203 to 395 enclose the GMPS ATP-PPase domain; it reads WIMKNHIEEA…LGLPPEMVYR (193 aa). 230 to 236 lines the ATP pocket; sequence SGGVDSS.

As to quaternary structure, homodimer.

The enzyme catalyses XMP + L-glutamine + ATP + H2O = GMP + L-glutamate + AMP + diphosphate + 2 H(+). Its pathway is purine metabolism; GMP biosynthesis; GMP from XMP (L-Gln route): step 1/1. In terms of biological role, catalyzes the synthesis of GMP from XMP. This chain is GMP synthase [glutamine-hydrolyzing], found in Burkholderia cenocepacia (strain ATCC BAA-245 / DSM 16553 / LMG 16656 / NCTC 13227 / J2315 / CF5610) (Burkholderia cepacia (strain J2315)).